A 181-amino-acid polypeptide reads, in one-letter code: UPF0232 protein SAV_4320 (181 aa).

Residues 1 to 10 (MSDTPAQTPE) are compositionally biased toward polar residues. Disordered stretches follow at residues 1-64 (MSDT…GRDP) and 156-181 (QGPG…DTYG). The segment covering 30-39 (AAKEQARARG) has biased composition (basic and acidic residues).

It belongs to the UPF0232 family.

The chain is UPF0232 protein SAV_4320 from Streptomyces avermitilis (strain ATCC 31267 / DSM 46492 / JCM 5070 / NBRC 14893 / NCIMB 12804 / NRRL 8165 / MA-4680).